The sequence spans 509 residues: Proto-oncogene tyrosine-protein kinase LCK (509 aa).

Gly2 carries N-myristoyl glycine lipidation. Positions 2–72 are interactions with CD4 and CD8; that stretch reads GCVCSSNPED…DNLVIALHSY (71 aa). 2 S-palmitoyl cysteine lipidation sites follow: Cys3 and Cys5. Residues 61–121 form the SH3 domain; it reads LQDNLVIALH…PFNFVAKANS (61 aa). A Glycyl lysine isopeptide (Lys-Gly) (interchain with G-Cter in ubiquitin) cross-link involves residue Lys99. At Ser102 the chain carries Phosphoserine. An SH2 domain is found at 127–224; the sequence is WFFKNLSRKD…GLCTKLSRPC (98 aa). Residues 154–242 are interaction with PTPRH; the sequence is RESESTAGSF…WWEDEWEVPR (89 aa). Thr159 bears the Phosphothreonine mark. Phosphoserine is present on Ser162. Phosphotyrosine is present on Tyr192. Ser194 carries the post-translational modification Phosphoserine. A Protein kinase domain is found at 245–498; that stretch reads LKLVERLGAG…YLRSVLDDFF (254 aa). ATP contacts are provided by residues 251–259 and Lys273; that span reads LGAGQFGEV. Lys276 participates in a covalent cross-link: Glycyl lysine isopeptide (Lys-Gly) (interchain with G-Cter in ubiquitin). The active-site Proton acceptor is Asp364. Tyr394 is modified (phosphotyrosine; by autocatalysis). Tyr505 is modified (phosphotyrosine).

Belongs to the protein kinase superfamily. Tyr protein kinase family. SRC subfamily. Binds to the cytoplasmic domain of cell surface receptors, such as AXL, CD2, CD4, CD5, CD8, CD44, CD45 and CD122. Also binds to effector molecules, such as PI4K, VAV1, RASA1, FYB1 and to other protein kinases including CDK1, RAF1, ZAP70 and SYK. Binds to phosphatidylinositol 3'-kinase (PI3K) from T-lymphocytes through its SH3 domain and to the tyrosine phosphorylated form of KHDRBS1/p70 through its SH2 domain. Interacts with SQSTM1. Interacts with phosphorylated LIME1. Interacts with CBLB and PTPRH. Interacts with RUNX3. Forms a signaling complex with EPHA1, PTK2B and PI3-KINASE; upon activation by EFNA1 which may regulate T-lymphocytes migration. Associates with ZAP70 and RHOH; these interactions allow LCK-mediated RHOH and CD3 subunit phosphorylations in presence of a functional ZAP70. Interacts with CEACAM1 (via cytoplasmic domain); mediates CEACAM1 phosphorylation resulting in PTPN6 recruitment that dephosphorylates TCR stimulation-induced CD247 and ZAP70. Interacts with FYB2. Interacts with CD160. Interacts with CD48. Autophosphorylated on Tyr-394, increasing enzymatic activity, this site is dephosphorylated by PTN22. Phosphorylated on Tyr-505 by CSK, decreasing activity. Dephosphorylated by PTPRC/CD45. Dephosphorylation at Tyr-394 by PTPN2 negatively regulates T-cells differentiation. Dephosphorylation at Tyr-394 by DUSP22 negatively regulates T-cell receptor signaling. In terms of processing, myristoylation is required prior to palmitoylation. Post-translationally, palmitoylation regulates association with the plasma membrane and could be mediated by ZDHHC2. 'Lys-63'-linked ubiquitinated at Lys-99 and Lys-276 by UBR2; this modification is required for autophosphorylation at Tyr-394.

The protein localises to the cell membrane. It localises to the cytoplasm. Its subcellular location is the cytosol. The enzyme catalyses L-tyrosyl-[protein] + ATP = O-phospho-L-tyrosyl-[protein] + ADP + H(+). Its activity is regulated as follows. The relative activities of the inhibitory tyrosine-protein kinase CSK and the activating tyrosine-protein phosphatase PTPRC/CD45 determine the level of LCK activity. These interactions allow rapid and efficient activation of LCK in response to TCR stimulation. Non-receptor tyrosine-protein kinase that plays an essential role in the selection and maturation of developing T-cells in the thymus and in the function of mature T-cells. Plays a key role in T-cell antigen receptor (TCR)-linked signal transduction pathways. Constitutively associated with the cytoplasmic portions of the CD4 and CD8 surface receptors. Association of the TCR with a peptide antigen-bound MHC complex facilitates the interaction of CD4 and CD8 with MHC class II and class I molecules, respectively, thereby recruiting the associated LCK protein to the vicinity of the TCR/CD3 complex. LCK then phosphorylates tyrosine residues within the immunoreceptor tyrosine-based activation motifs (ITAM) of the cytoplasmic tails of the TCR-gamma chains and CD3 subunits, initiating the TCR/CD3 signaling pathway. Once stimulated, the TCR recruits the tyrosine kinase ZAP70, that becomes phosphorylated and activated by LCK. Following this, a large number of signaling molecules are recruited, ultimately leading to lymphokine production. LCK also contributes to signaling by other receptor molecules. Associates directly with the cytoplasmic tail of CD2, which leads to hyperphosphorylation and activation of LCK. Also plays a role in the IL2 receptor-linked signaling pathway that controls the T-cell proliferative response. Binding of IL2 to its receptor results in increased activity of LCK. Is expressed at all stages of thymocyte development and is required for the regulation of maturation events that are governed by both pre-TCR and mature alpha beta TCR. Phosphorylates other substrates including RUNX3, PTK2B/PYK2, the microtubule-associated protein MAPT, RHOH or TYROBP. Interacts with UNC119; this interaction plays a crucial role in activation of LCK. In Rattus norvegicus (Rat), this protein is Proto-oncogene tyrosine-protein kinase LCK (Lck).